Here is a 332-residue protein sequence, read N- to C-terminus: 2,3-diketo-L-gulonate reductase (332 aa).

H44 serves as the catalytic Proton donor. Residues 168–174 (ITMVDMS), 224–225 (WK), and 304–306 (GHE) each bind NAD(+).

This sequence belongs to the LDH2/MDH2 oxidoreductase family. DlgD subfamily. As to quaternary structure, homodimer.

It localises to the cytoplasm. The catalysed reaction is 3-dehydro-L-gulonate + NAD(+) = 2,3-dioxo-L-gulonate + NADH + H(+). It catalyses the reaction 3-dehydro-L-gulonate + NADP(+) = 2,3-dioxo-L-gulonate + NADPH + H(+). Catalyzes the reduction of 2,3-diketo-L-gulonate in the presence of NADH, to form 3-keto-L-gulonate. The polypeptide is 2,3-diketo-L-gulonate reductase (Escherichia coli O6:K15:H31 (strain 536 / UPEC)).